Here is a 620-residue protein sequence, read N- to C-terminus: Chaperone protein HscA homolog (620 aa).

The protein belongs to the heat shock protein 70 family.

Chaperone involved in the maturation of iron-sulfur cluster-containing proteins. Has a low intrinsic ATPase activity which is markedly stimulated by HscB. The chain is Chaperone protein HscA homolog from Pseudomonas fluorescens (strain ATCC BAA-477 / NRRL B-23932 / Pf-5).